The sequence spans 282 residues: Protoheme IX farnesyltransferase (282 aa).

9 helical membrane-spanning segments follow: residues 9–29, 39–59, 79–99, 102–122, 139–159, 165–185, 210–230, 231–251, and 261–281; these read LAKPGIIFGNLITLTGGFLLA, LPLFVYVMIGVALMIAAGCVF, LVTGDISVIQATIYGTILLIL, LVLYYLVNLLTLWIIIIGFIV, VLGGISGAIPPVAGYTAVVNI, LALFLILFFWQIPHSYAIAML, IMLFYLALFVVSCALPAVLGS, ADLFSFIVCMLVALFWMYKSI, and VFAKTVFKFSIIVITAICLTM.

It belongs to the UbiA prenyltransferase family. Protoheme IX farnesyltransferase subfamily.

The protein resides in the cell inner membrane. It carries out the reaction heme b + (2E,6E)-farnesyl diphosphate + H2O = Fe(II)-heme o + diphosphate. It functions in the pathway porphyrin-containing compound metabolism; heme O biosynthesis; heme O from protoheme: step 1/1. Converts heme B (protoheme IX) to heme O by substitution of the vinyl group on carbon 2 of heme B porphyrin ring with a hydroxyethyl farnesyl side group. The sequence is that of Protoheme IX farnesyltransferase from Francisella tularensis subsp. holarctica (strain FTNF002-00 / FTA).